A 249-amino-acid polypeptide reads, in one-letter code: 1-(5-phosphoribosyl)-5-[(5-phosphoribosylamino)methylideneamino] imidazole-4-carboxamide isomerase (249 aa).

The active-site Proton acceptor is the Asp-8. The active-site Proton donor is Asp-129.

The protein belongs to the HisA/HisF family.

The protein localises to the cytoplasm. It catalyses the reaction 1-(5-phospho-beta-D-ribosyl)-5-[(5-phospho-beta-D-ribosylamino)methylideneamino]imidazole-4-carboxamide = 5-[(5-phospho-1-deoxy-D-ribulos-1-ylimino)methylamino]-1-(5-phospho-beta-D-ribosyl)imidazole-4-carboxamide. The protein operates within amino-acid biosynthesis; L-histidine biosynthesis; L-histidine from 5-phospho-alpha-D-ribose 1-diphosphate: step 4/9. The chain is 1-(5-phosphoribosyl)-5-[(5-phosphoribosylamino)methylideneamino] imidazole-4-carboxamide isomerase from Nitratidesulfovibrio vulgaris (strain ATCC 29579 / DSM 644 / CCUG 34227 / NCIMB 8303 / VKM B-1760 / Hildenborough) (Desulfovibrio vulgaris).